A 210-amino-acid polypeptide reads, in one-letter code: UPF0502 protein Sama_1967 (210 aa).

Belongs to the UPF0502 family.

This chain is UPF0502 protein Sama_1967, found in Shewanella amazonensis (strain ATCC BAA-1098 / SB2B).